The sequence spans 308 residues: Cytochrome b (308 aa).

4 helical membrane-spanning segments follow: residues 1 to 21, 45 to 66, 81 to 101, and 146 to 166; these read FGSL…LMAM, WLIR…YLHI, WNTG…GYVL, and FFAL…IHLT. Heme b is bound by residues His51 and His65. The heme b site is built by His150 and His164. A ubiquinone is bound at residue His169. The next 3 membrane-spanning stretches (helical) occupy residues 194-214, 256-276, and 288-308; these read TKDI…AMFS, LGGV…PFLH, and LSQL…WVGS.

It belongs to the cytochrome b family. As to quaternary structure, the cytochrome bc1 complex contains 11 subunits: 3 respiratory subunits (MT-CYB, CYC1 and UQCRFS1), 2 core proteins (UQCRC1 and UQCRC2) and 6 low-molecular weight proteins (UQCRH/QCR6, UQCRB/QCR7, UQCRQ/QCR8, UQCR10/QCR9, UQCR11/QCR10 and a cleavage product of UQCRFS1). This cytochrome bc1 complex then forms a dimer. Heme b is required as a cofactor.

It localises to the mitochondrion inner membrane. In terms of biological role, component of the ubiquinol-cytochrome c reductase complex (complex III or cytochrome b-c1 complex) that is part of the mitochondrial respiratory chain. The b-c1 complex mediates electron transfer from ubiquinol to cytochrome c. Contributes to the generation of a proton gradient across the mitochondrial membrane that is then used for ATP synthesis. The polypeptide is Cytochrome b (MT-CYB) (Asthenes dorbignyi (Creamy-breasted canastero)).